Reading from the N-terminus, the 62-residue chain is Photosystem II reaction center protein Z (62 aa).

2 consecutive transmembrane segments (helical) span residues 8–28 (AVFA…VVFA) and 41–61 (FSGT…NSLI).

This sequence belongs to the PsbZ family. As to quaternary structure, PSII is composed of 1 copy each of membrane proteins PsbA, PsbB, PsbC, PsbD, PsbE, PsbF, PsbH, PsbI, PsbJ, PsbK, PsbL, PsbM, PsbT, PsbY, PsbZ, Psb30/Ycf12, at least 3 peripheral proteins of the oxygen-evolving complex and a large number of cofactors. It forms dimeric complexes.

Its subcellular location is the plastid. The protein localises to the chloroplast thylakoid membrane. In terms of biological role, may control the interaction of photosystem II (PSII) cores with the light-harvesting antenna, regulates electron flow through the 2 photosystem reaction centers. PSII is a light-driven water plastoquinone oxidoreductase, using light energy to abstract electrons from H(2)O, generating a proton gradient subsequently used for ATP formation. The sequence is that of Photosystem II reaction center protein Z from Calycanthus floridus var. glaucus (Eastern sweetshrub).